The following is a 357-amino-acid chain: Peptide chain release factor 1 (357 aa).

Glutamine 234 is subject to N5-methylglutamine. Positions 283-313 (SKKQEQRSSNRKQQVGSGDRSERIRTYNFPQ) are disordered.

It belongs to the prokaryotic/mitochondrial release factor family. Post-translationally, methylated by PrmC. Methylation increases the termination efficiency of RF1.

The protein localises to the cytoplasm. In terms of biological role, peptide chain release factor 1 directs the termination of translation in response to the peptide chain termination codons UAG and UAA. This chain is Peptide chain release factor 1 (prfA), found in Borreliella burgdorferi (strain ATCC 35210 / DSM 4680 / CIP 102532 / B31) (Borrelia burgdorferi).